The primary structure comprises 602 residues: uncharacterized protein (602 aa).

Residues 51 to 210 enclose the Helicase ATP-binding domain; that stretch reads QYLGTQPRDF…PFVSYQPDAD (160 aa). Residues 430 to 439 are compositionally biased toward basic and acidic residues; it reads PHRESAHDPL. Disordered regions lie at residues 430–452 and 518–538; these read PHRESAHDPLDGDPATRTQTERG and RAQLQKGATQPATSGASASVH. Residues 523-534 are compositionally biased toward polar residues; it reads KGATQPATSGAS.

The protein to M.leprae ML1624.

This is an uncharacterized protein from Mycobacterium tuberculosis (strain ATCC 25618 / H37Rv).